The chain runs to 83 residues: Small ribosomal subunit protein bS16 (83 aa).

It belongs to the bacterial ribosomal protein bS16 family.

The chain is Small ribosomal subunit protein bS16 from Pseudomonas fluorescens (strain ATCC BAA-477 / NRRL B-23932 / Pf-5).